Here is a 349-residue protein sequence, read N- to C-terminus: Hydroxymethylglutaryl-CoA synthase (349 aa).

Positions 29 and 30 each coordinate (3S)-3-hydroxy-3-methylglutaryl-CoA. Catalysis depends on E81, which acts as the Proton donor/acceptor. Residues C113 and T154 each contribute to the (3S)-3-hydroxy-3-methylglutaryl-CoA site. C113 (acyl-thioester intermediate) is an active-site residue. R202 contacts CoA. (3S)-3-hydroxy-3-methylglutaryl-CoA is bound by residues T204 and H237. Catalysis depends on H237, which acts as the Proton donor/acceptor. K242 provides a ligand contact to CoA. Residues K246, N269, and S299 each contribute to the (3S)-3-hydroxy-3-methylglutaryl-CoA site.

It belongs to the thiolase-like superfamily. Archaeal HMG-CoA synthase family. In terms of assembly, interacts with acetoacetyl-CoA thiolase that catalyzes the precedent step in the pathway and with a DUF35 protein. The acetoacetyl-CoA thiolase/HMG-CoA synthase complex channels the intermediate via a fused CoA-binding site, which allows for efficient coupling of the endergonic thiolase reaction with the exergonic HMGCS reaction.

The catalysed reaction is acetoacetyl-CoA + acetyl-CoA + H2O = (3S)-3-hydroxy-3-methylglutaryl-CoA + CoA + H(+). The protein operates within metabolic intermediate biosynthesis; (R)-mevalonate biosynthesis; (R)-mevalonate from acetyl-CoA: step 2/3. In terms of biological role, catalyzes the condensation of acetyl-CoA with acetoacetyl-CoA to form 3-hydroxy-3-methylglutaryl-CoA (HMG-CoA). Functions in the mevalonate (MVA) pathway leading to isopentenyl diphosphate (IPP), a key precursor for the biosynthesis of isoprenoid compounds that are building blocks of archaeal membrane lipids. This is Hydroxymethylglutaryl-CoA synthase from Methanosarcina mazei (strain ATCC BAA-159 / DSM 3647 / Goe1 / Go1 / JCM 11833 / OCM 88) (Methanosarcina frisia).